Reading from the N-terminus, the 757-residue chain is Cell cycle progression protein 1 (757 aa).

Topologically, residues 1–217 are cytoplasmic; sequence MSENSSDSDS…KRQFSSGLNK (217 aa). Residues 1–308 are interaction with MCF2L and SRC; it reads MSENSSDSDS…QKTNLATENQ (308 aa). The segment at 152–207 is disordered; that stretch reads VFSSQPSDDESSSDETSNQPSPAFRRRRARKKTVSASESEDRLVAEQETEPSKELS. Basic residues predominate over residues 175–184; it reads FRRRRARKKT. S186 carries the post-translational modification Phosphoserine. Basic and acidic residues predominate over residues 190-207; sequence SEDRLVAEQETEPSKELS. Residues 218–238 form a helical; Signal-anchor for type II membrane protein membrane-spanning segment; sequence CVILALVIAISMGFGHFYGTI. The Lumenal segment spans residues 239-757; it reads QIQKRQQLVR…YIKPCHYSSL (519 aa). 2 coiled-coil regions span residues 248-272 and 306-450; these read RKIH…QESF and ENQY…LWER. A compositionally biased stretch (basic and acidic residues) spans 458–468; the sequence is QNGKQGTDGKK. The interval 458 to 483 is disordered; that stretch reads QNGKQGTDGKKKGGRGSHRAKNKSKE. The span at 469–479 shows a compositional bias: basic residues; that stretch reads KGGRGSHRAKN. Residues 504-530 adopt a coiled-coil conformation; the sequence is VRHHKEKIKQAKEAVKENLKKFSDSVK.

The protein belongs to the CCPG1 family. Interacts with MCF2L. May interact with MCF2, ARHGEF1, BCR, VAV1 and FGD1, but not with TIAM1. Interacts with GTP-bound CDC42 and SRC.

Its subcellular location is the cytoplasmic granule membrane. Functionally, acts as an assembly platform for Rho protein signaling complexes. Limits guanine nucleotide exchange activity of MCF2L toward RHOA, which results in an inhibition of both its transcriptional activation ability and its transforming activity. Does not inhibit activity of MCF2L toward CDC42, or activity of MCF2 toward either RHOA or CDC42. May be involved in cell cycle regulation. The chain is Cell cycle progression protein 1 (CCPG1) from Homo sapiens (Human).